A 434-amino-acid chain; its full sequence is Trigger factor (434 aa).

The region spanning 161 to 246 is the PPIase FKBP-type domain; the sequence is EDRATLDFTG…LKKVEVRELP (86 aa).

This sequence belongs to the FKBP-type PPIase family. Tig subfamily.

It is found in the cytoplasm. The catalysed reaction is [protein]-peptidylproline (omega=180) = [protein]-peptidylproline (omega=0). Involved in protein export. Acts as a chaperone by maintaining the newly synthesized protein in an open conformation. Functions as a peptidyl-prolyl cis-trans isomerase. The polypeptide is Trigger factor (Yersinia enterocolitica serotype O:8 / biotype 1B (strain NCTC 13174 / 8081)).